The primary structure comprises 445 residues: UPF0210 protein SMU_73 (445 aa).

The protein belongs to the UPF0210 family. In terms of assembly, homodimer.

The protein is UPF0210 protein SMU_73 of Streptococcus mutans serotype c (strain ATCC 700610 / UA159).